A 259-amino-acid chain; its full sequence is Trans-aconitate 2-methyltransferase (259 aa).

Belongs to the methyltransferase superfamily. Tam family.

The protein resides in the cytoplasm. The enzyme catalyses trans-aconitate + S-adenosyl-L-methionine = (E)-3-(methoxycarbonyl)pent-2-enedioate + S-adenosyl-L-homocysteine. Catalyzes the S-adenosylmethionine monomethyl esterification of trans-aconitate. The chain is Trans-aconitate 2-methyltransferase from Variovorax paradoxus (strain S110).